The primary structure comprises 102 residues: Large ribosomal subunit protein bL21 (102 aa).

This sequence belongs to the bacterial ribosomal protein bL21 family. Part of the 50S ribosomal subunit. Contacts protein L20.

This protein binds to 23S rRNA in the presence of protein L20. The sequence is that of Large ribosomal subunit protein bL21 from Listeria monocytogenes serotype 4b (strain F2365).